The following is a 261-amino-acid chain: MAEKLPAPLLALFAPRPPLRYLPPMDVPPEKRSTPRVSGIAKYLKYAQSHDQQYHPTESLEEKRLRLRDEKQKQQRERLRSMIKVWDPDHDRHVIGDPYKTMFLSRLSYDTKESDIEREFTRYGPIERIRVVRNKVTGKSMGYAFVVFERERDLKVAYKASAGLMLNGRRIVVDVERGRTVKGWLPRKLGGGLGGRHYTKERPRRERGSRFRGDSGFRGGYRGGFRKSSGGGSRFGRGPTRSSHSSDYGGRDSSPKRRRYN.

Residues 100–178 (KTMFLSRLSY…RRIVVDVERG (79 aa)) form the RRM domain. The interval 192–261 (GLGGRHYTKE…DSSPKRRRYN (70 aa)) is disordered. Residues 198–215 (YTKERPRRERGSRFRGDS) show a composition bias toward basic and acidic residues. Residues 216-235 (GFRGGYRGGFRKSSGGGSRF) are compositionally biased toward gly residues.

Component of the spliceosome, where it is associated with snRNP U1. Associates with U1 snRNA.

It is found in the nucleus. Its function is as follows. Involved in nuclear mRNA splicing. Essential for growth. This chain is U1 small nuclear ribonucleoprotein 70 kDa homolog, found in Schizosaccharomyces pombe (strain 972 / ATCC 24843) (Fission yeast).